The chain runs to 298 residues: Glycine--tRNA ligase alpha subunit (298 aa).

It belongs to the class-II aminoacyl-tRNA synthetase family. Tetramer of two alpha and two beta subunits.

Its subcellular location is the cytoplasm. The enzyme catalyses tRNA(Gly) + glycine + ATP = glycyl-tRNA(Gly) + AMP + diphosphate. This is Glycine--tRNA ligase alpha subunit from Helicobacter pylori (strain Shi470).